We begin with the raw amino-acid sequence, 306 residues long: UDP-3-O-acyl-N-acetylglucosamine deacetylase (306 aa).

3 residues coordinate Zn(2+): His79, His238, and Asp242. His265 functions as the Proton donor in the catalytic mechanism.

The protein belongs to the LpxC family. The cofactor is Zn(2+).

It carries out the reaction a UDP-3-O-[(3R)-3-hydroxyacyl]-N-acetyl-alpha-D-glucosamine + H2O = a UDP-3-O-[(3R)-3-hydroxyacyl]-alpha-D-glucosamine + acetate. The protein operates within glycolipid biosynthesis; lipid IV(A) biosynthesis; lipid IV(A) from (3R)-3-hydroxytetradecanoyl-[acyl-carrier-protein] and UDP-N-acetyl-alpha-D-glucosamine: step 2/6. In terms of biological role, catalyzes the hydrolysis of UDP-3-O-myristoyl-N-acetylglucosamine to form UDP-3-O-myristoylglucosamine and acetate, the committed step in lipid A biosynthesis. The chain is UDP-3-O-acyl-N-acetylglucosamine deacetylase from Shewanella pealeana (strain ATCC 700345 / ANG-SQ1).